Here is a 258-residue protein sequence, read N- to C-terminus: Small ribosomal subunit protein uS2 (258 aa).

Belongs to the universal ribosomal protein uS2 family.

In Leuconostoc citreum (strain KM20), this protein is Small ribosomal subunit protein uS2.